A 707-amino-acid chain; its full sequence is uncharacterized protein (707 aa).

Disordered stretches follow at residues 15-122 (ALAK…LESY) and 667-707 (ESVQ…DIDE). 2 stretches are compositionally biased toward basic and acidic residues: residues 18-32 (KKNDKIKKKDTDKGI) and 40-52 (EGKDETLKRDVEK). Position 112 is a phosphoserine (Ser112). Residues 659–700 (EEQRKLIRESVQQDQEHKEQMRQKKKQALKSDDIELDDLSEE) are a coiled coil. Residues 692 to 707 (IELDDLSEEEAEDIDE) are compositionally biased toward acidic residues.

Belongs to the NOC2 family.

It localises to the nucleus. The protein localises to the nucleolus. This is an uncharacterized protein from Schizosaccharomyces pombe (strain 972 / ATCC 24843) (Fission yeast).